A 247-amino-acid chain; its full sequence is ATP synthase subunit a, chloroplastic (247 aa).

5 consecutive transmembrane segments (helical) span residues 38–58, 95–115, 134–154, 199–219, and 220–240; these read QVLI…IIAV, VPFI…GALL, INTT…AGLS, LVVV…VMFL, and GLFT…AYIG.

This sequence belongs to the ATPase A chain family. F-type ATPases have 2 components, CF(1) - the catalytic core - and CF(0) - the membrane proton channel. CF(1) has five subunits: alpha(3), beta(3), gamma(1), delta(1), epsilon(1). CF(0) has four main subunits: a, b, b' and c.

The protein resides in the plastid. The protein localises to the chloroplast thylakoid membrane. Functionally, key component of the proton channel; it plays a direct role in the translocation of protons across the membrane. The chain is ATP synthase subunit a, chloroplastic from Zea mays (Maize).